Consider the following 498-residue polypeptide: ATP synthase subunit beta, chloroplastic (498 aa).

172–179 (GGAGVGKT) is an ATP binding site.

Belongs to the ATPase alpha/beta chains family. As to quaternary structure, F-type ATPases have 2 components, CF(1) - the catalytic core - and CF(0) - the membrane proton channel. CF(1) has five subunits: alpha(3), beta(3), gamma(1), delta(1), epsilon(1). CF(0) has four main subunits: a(1), b(1), b'(1) and c(9-12).

It is found in the plastid. The protein resides in the chloroplast thylakoid membrane. It carries out the reaction ATP + H2O + 4 H(+)(in) = ADP + phosphate + 5 H(+)(out). Functionally, produces ATP from ADP in the presence of a proton gradient across the membrane. The catalytic sites are hosted primarily by the beta subunits. This chain is ATP synthase subunit beta, chloroplastic, found in Zea mays (Maize).